Reading from the N-terminus, the 952-residue chain is Inactive atromentin synthetase invA6 (952 aa).

The tract at residues 58–462 (DSSVQTRSFS…NGRIKDTVIV (405 aa)) is adenylation (A) domain. The Carrier domain occupies 594-672 (APSTETEKTL…SLAKYVDSLV (79 aa)). The interval 599 to 669 (TEKTLGRLYA…VISSLAKYVD (71 aa)) is thiolation and peptide carrier (T) domain. Ser631 carries the post-translational modification O-(pantetheine 4'-phosphoryl)serine. Residues 695–939 (PIFMVHPGIG…LMDFDHVSGF (245 aa)) form a thioesterase (TE) domain region.

It belongs to the ATP-dependent AMP-binding enzyme family.

Functionally, inactive atromentin synthetase homolog. Does not accept 4-hydroxyphenylpyruvate (4-HPP) as substrate. Both the adenylation (A) and the thioesterase (TE) domain of the invA6 enzyme are inactive. The polypeptide is Inactive atromentin synthetase invA6 (invA6) (Paxillus involutus (Naked brimcap)).